The following is a 228-amino-acid chain: LexA repressor (228 aa).

A DNA-binding region (H-T-H motif) is located at residues 28 to 48 (IREIGEALDIRSTNGVNDHLK). Residues S146 and K183 each act as for autocatalytic cleavage activity in the active site.

This sequence belongs to the peptidase S24 family. In terms of assembly, homodimer.

The enzyme catalyses Hydrolysis of Ala-|-Gly bond in repressor LexA.. Represses a number of genes involved in the response to DNA damage (SOS response), including recA and lexA. In the presence of single-stranded DNA, RecA interacts with LexA causing an autocatalytic cleavage which disrupts the DNA-binding part of LexA, leading to derepression of the SOS regulon and eventually DNA repair. The polypeptide is LexA repressor (Anaeromyxobacter dehalogenans (strain 2CP-1 / ATCC BAA-258)).